The following is a 214-amino-acid chain: 3,4-dihydroxy-2-butanone 4-phosphate synthase (214 aa).

Residues 37–38 (RE), aspartate 42, 150–154 (RRGHT), and glutamate 174 contribute to the D-ribulose 5-phosphate site. Mg(2+) is bound at residue glutamate 38. Residue histidine 153 participates in Mg(2+) binding.

The protein belongs to the DHBP synthase family. In terms of assembly, homodimer. Mg(2+) serves as cofactor. Mn(2+) is required as a cofactor.

It catalyses the reaction D-ribulose 5-phosphate = (2S)-2-hydroxy-3-oxobutyl phosphate + formate + H(+). It participates in cofactor biosynthesis; riboflavin biosynthesis; 2-hydroxy-3-oxobutyl phosphate from D-ribulose 5-phosphate: step 1/1. Functionally, catalyzes the conversion of D-ribulose 5-phosphate to formate and 3,4-dihydroxy-2-butanone 4-phosphate. The sequence is that of 3,4-dihydroxy-2-butanone 4-phosphate synthase from Histophilus somni (strain 2336) (Haemophilus somnus).